Consider the following 758-residue polypeptide: Solute carrier family 26 member 6 (758 aa).

Over 1–117 the chain is Cytoplasmic; it reads MGLPDGSDQG…PQGLAYALLA (117 aa). The chain crosses the membrane as a helical span at residues 118–138; the sequence is GLPPMFGLYSSFYPVFIYFLF. The Extracellular portion of the chain corresponds to 139–187; it reads GTSRHISVGTFAVMSVMVGSVTESLTADKAFVQGLNATADDARVQVAYT. The N-linked (GlcNAc) asparagine glycan is linked to N174. A helical transmembrane segment spans residues 188-208; it reads LSFLVGLFQVGLGLVHFGFVV. Topologically, residues 209–263 are cytoplasmic; that stretch reads TYLSEPLVRSYTTAASVQVLVSQLKYVFGIKLSSHSGPLSVIYTVLEVCAQLPET. Residues 264 to 284 traverse the membrane as a helical segment; it reads VPGTVVTAIVAGVALVLVKLL. Topologically, residues 285-292 are extracellular; sequence NEKLHRRL. The helical transmembrane segment at 293-313 threads the bilayer; sequence PLPIPGELLTLIGATGISYGV. Residues 314-340 lie on the Cytoplasmic side of the membrane; it reads KLNDRFKVDVVGNITTGLIPPVAPKTE. The chain crosses the membrane as a helical span at residues 341 to 361; it reads LFATLVGNAFAIAVVGFAIAI. Over 362–380 the chain is Extracellular; the sequence is SLGKIFALRHGYRVDSNQE. Residues 381-401 form a helical membrane-spanning segment; sequence LVALGLSNLIGGFFQCFPVSC. The Cytoplasmic portion of the chain corresponds to 402–417; it reads SMSRSLVQESTGGNTQ. A helical transmembrane segment spans residues 418–438; sequence VAGAVSSLFILLIIVKLGELF. The Extracellular portion of the chain corresponds to 439 to 485; the sequence is RDLPKAVLAAVIIVNLKGMMKQFSDICSLWKANRVDLLIWLVTFVAT. The helical transmembrane segment at 486 to 506 threads the bilayer; it reads ILLNLDIGLAVSIVFSLLLVV. Residues 507-758 are Cytoplasmic-facing; sequence VRMQLPHYSV…PKSPVLATKL (252 aa). The STAS domain occupies 531–741; sequence EYSGAKEVPG…ASVHDAVTFA (211 aa). A disordered region spans residues 585–608; that stretch reads EMKLKRMKKAKKSQKQDASSKISS. S751 carries the phosphoserine modification.

In terms of assembly, interacts (via C-terminal domain) with PDZK1 (via C-terminal PDZ domain); the interaction induces chloride and oxalate exchange transport. Interacts with CFTR, SLC26A3 and NHERF1. Interacts with AHCYL1; the interaction increases SLC26A6 activity. Post-translationally, N-glycosylated. Glycosylation at Asn-174 positively regulates its chloride oxalate exchanger activity. As to expression, expressed in kidney (at protein level). Expressed in spermatogenic cells. Expressed in intestine, kidney, testis, brain, muscle, heart, and stomach. Expressed in the submandibular and sublingual salivary glands. In terms of tissue distribution, highly expressed in stomach, kidney, heart and small intestine, low in the lung, liver, testis, brain, skeletal muscle and colon. Expressed in the heart.

The protein localises to the cell membrane. The protein resides in the apical cell membrane. It localises to the cytoplasmic vesicle membrane. It is found in the microsome. It catalyses the reaction 2 hydrogencarbonate(in) + chloride(out) = 2 hydrogencarbonate(out) + chloride(in). The catalysed reaction is oxalate(in) + chloride(out) = oxalate(out) + chloride(in). The enzyme catalyses oxalate(in) + formate(out) = oxalate(out) + formate(in). It carries out the reaction oxalate(in) + sulfate(out) = oxalate(out) + sulfate(in). It catalyses the reaction formate(in) + chloride(out) = formate(out) + chloride(in). The catalysed reaction is sulfate(in) = sulfate(out). Apical membrane chloride-bicarbonate exchange activity of the pancreatic duct is inhibited by 4,4'-diisothiocyanatostilbene-2,2'-disulfonic acid (DIDS). Oxalate secretion in the duodenum and chloride-formate exchange activity is inhibited by DIDS. Its activity is regulated as follows. Chloride-formate exchange activity and transcellular sulfate absorption is inhibited by 4,4'-diisothiocyanatostilbene-2,2'-disulfonic acid (DIDS). Its function is as follows. Apical membrane anion-exchanger with wide epithelial distribution that plays a role as a component of the pH buffering system for maintaining acid-base homeostasis. Acts as a versatile DIDS-sensitive inorganic and organic anion transporter that mediates the uptake of monovalent anions like chloride, bicarbonate, formate and hydroxyl ion and divalent anions like sulfate and oxalate. Functions in multiple exchange modes involving pairs of these anions, which include chloride-bicarbonate, chloride-oxalate, oxalate-formate, oxalate-sulfate and chloride-formate exchange. Apical membrane chloride-bicarbonate exchanger that mediates luminal chloride absorption and bicarbonate secretion by the small intestinal brush border membrane and contributes to intracellular pH regulation in the duodenal upper villous epithelium during proton-coupled peptide absorption, possibly by providing a bicarbonate import pathway. Its association with carbonic anhydrase CA2 forms a bicarbonate transport metabolon; hence maximizes the local concentration of bicarbonate at the transporter site. Also mediates intestinal chloride absorption and oxalate secretion, thereby preventing hyperoxaluria and calcium oxalate urolithiasis. Transepithelial oxalate secretion, chloride-formate, chloride-oxalate and chloride-bicarbonate transport activities in the duodenum are inhibited by PKC activation in a calcium-independent manner. The apical membrane chloride-bicarbonate exchanger also provides a major route for fluid and bicarbonate secretion into the proximal tubules of the kidney as well as into the proximal part of the interlobular pancreatic ductal tree, where it mediates electrogenic chloride-bicarbonate exchange with a chloride-bicarbonate stoichiometry of 1:2, and hence will dilute and alkalinize protein-rich acinar secretion. Also mediates the transcellular sulfate absorption and oxalate secretion across the apical membrane in the duodenum and the formate ion efflux at the apical brush border of cells in the proximal tubules of kidney. Plays a role in sperm capacitation by increasing intracellular pH. Functionally, mediates electrogenic chloride-bicarbonate exchange with a chloride-bicarbonate stoichiometry of 1:2. Also mediates exchange of chloride-formate and chloride-oxalate ions. Mediates transcellular sulfate absorption. The protein is Solute carrier family 26 member 6 of Mus musculus (Mouse).